A 1755-amino-acid polypeptide reads, in one-letter code: Transposon Ty1-DR1 Gag-Pol polyprotein (1755 aa).

Polar residues-rich tracts occupy residues 1 to 10, 48 to 60, and 127 to 152; these read MESQQLSNYP, TKAN…TPAS, and QSQF…GNTF. Disordered regions lie at residues 1–93, 126–173, and 352–421; these read MESQ…MMTQ, PQSQ…RPPP, and GSRN…SKST. Residues 153 to 165 show a composition bias toward low complexity; that stretch reads TDSSSADSDMTST. The tract at residues 299 to 401 is RNA-binding; that stretch reads NNGIHINNKV…NSKSKTARAH (103 aa). Residues 402–418 are compositionally biased toward low complexity; that stretch reads NVSTSNNSPSTDNDSIS. Position 416 is a phosphoserine (S416). D461 serves as the catalytic For protease activity; shared with dimeric partner. The integrase-type zinc finger-like stretch occupies residues 583 to 640; the sequence is NVHTSESTRKYPYPFIHRMLAHANAQTIRYSLKNNTITYFNESDVDWSSAIDYQCPDC. The region spanning 660–835 is the Integrase catalytic domain; it reads NSYEPFQYLH…AGLDISTLLP (176 aa). Positions 671 and 736 each coordinate Mg(2+). Disordered regions lie at residues 956–1087, 1092–1111, and 1130–1187; these read SKAV…ETEK, RSPS…NIVP, and DLPL…DNET. A compositionally biased stretch (low complexity) spans 960–969; the sequence is SPTDSTPPST. Residues 1005–1015 are compositionally biased toward polar residues; that stretch reads STPQISNIEST. Residues 1038 to 1053 are compositionally biased toward basic and acidic residues; that stretch reads ESSHASKSKDFRHSDS. Polar residues-rich tracts occupy residues 1054–1082 and 1101–1111; these read YSEN…QISD and PENNSSHNIVP. The short motif at 1178 to 1212 is the Bipartite nuclear localization signal element; that stretch reads KKRSLEDNETEIKVSRDTWNTKNMRSLEPPRSKKR. Residues 1338-1476 enclose the Reverse transcriptase Ty1/copia-type domain; sequence NNYYITQLDI…DILGLEIKYQ (139 aa). Residues D1346, D1427, D1428, D1610, E1652, and D1685 each contribute to the Mg(2+) site. Residues 1610–1752 enclose the RNase H Ty1/copia-type domain; that stretch reads DASYGNQPYY…IKTFKLLTNK (143 aa).

As to quaternary structure, the capsid protein forms a homotrimer, from which the VLPs are assembled. The protease is a homodimer, whose active site consists of two apposed aspartic acid residues. In terms of processing, initially, virus-like particles (VLPs) are composed of the structural unprocessed proteins Gag and Gag-Pol, and also contain the host initiator methionine tRNA (tRNA(i)-Met) which serves as a primer for minus-strand DNA synthesis, and a dimer of genomic Ty RNA. Processing of the polyproteins occurs within the particle and proceeds by an ordered pathway, called maturation. First, the protease (PR) is released by autocatalytic cleavage of the Gag-Pol polyprotein yielding capsid protein p45 and a Pol-p154 precursor protein. This cleavage is a prerequisite for subsequent processing of Pol-p154 at the remaining sites to release the mature structural and catalytic proteins. Maturation takes place prior to the RT reaction and is required to produce transposition-competent VLPs.

Its subcellular location is the cytoplasm. The protein localises to the nucleus. It carries out the reaction DNA(n) + a 2'-deoxyribonucleoside 5'-triphosphate = DNA(n+1) + diphosphate. The enzyme catalyses Endonucleolytic cleavage to 5'-phosphomonoester.. Capsid protein (CA) is the structural component of the virus-like particle (VLP), forming the shell that encapsulates the retrotransposons dimeric RNA genome. The particles are assembled from trimer-clustered units and there are holes in the capsid shells that allow for the diffusion of macromolecules. CA also has nucleocapsid-like chaperone activity, promoting primer tRNA(i)-Met annealing to the multipartite primer-binding site (PBS), dimerization of Ty1 RNA and initiation of reverse transcription. In terms of biological role, the aspartyl protease (PR) mediates the proteolytic cleavages of the Gag and Gag-Pol polyproteins after assembly of the VLP. Its function is as follows. Reverse transcriptase/ribonuclease H (RT) is a multifunctional enzyme that catalyzes the conversion of the retro-elements RNA genome into dsDNA within the VLP. The enzyme displays a DNA polymerase activity that can copy either DNA or RNA templates, and a ribonuclease H (RNase H) activity that cleaves the RNA strand of RNA-DNA heteroduplexes during plus-strand synthesis and hydrolyzes RNA primers. The conversion leads to a linear dsDNA copy of the retrotransposon that includes long terminal repeats (LTRs) at both ends. Functionally, integrase (IN) targets the VLP to the nucleus, where a subparticle preintegration complex (PIC) containing at least integrase and the newly synthesized dsDNA copy of the retrotransposon must transit the nuclear membrane. Once in the nucleus, integrase performs the integration of the dsDNA into the host genome. The chain is Transposon Ty1-DR1 Gag-Pol polyprotein (TY1B-DR1) from Saccharomyces cerevisiae (strain ATCC 204508 / S288c) (Baker's yeast).